Here is a 491-residue protein sequence, read N- to C-terminus: Probable malate:quinone oxidoreductase (491 aa).

This sequence belongs to the MQO family. FAD is required as a cofactor.

It catalyses the reaction (S)-malate + a quinone = a quinol + oxaloacetate. It functions in the pathway carbohydrate metabolism; tricarboxylic acid cycle; oxaloacetate from (S)-malate (quinone route): step 1/1. This is Probable malate:quinone oxidoreductase from Actinobacillus pleuropneumoniae serotype 5b (strain L20).